Here is a 325-residue protein sequence, read N- to C-terminus: Olfactory receptor 6Y1 (325 aa).

Topologically, residues 1–30 are extracellular; that stretch reads MTTIILEVDNHTVTTRFILLGFPTRPAFQL. A glycan (N-linked (GlcNAc...) asparagine) is linked at Asn10. The helical transmembrane segment at 31 to 51 threads the bilayer; it reads LFFSIFLATYLLTLLENLLII. The Cytoplasmic portion of the chain corresponds to 52–59; that stretch reads LAIHSDGQ. Residues 60–80 traverse the membrane as a helical segment; the sequence is LHKPMYFFLSHLSFLEMWYVT. Residues 81–104 lie on the Extracellular side of the membrane; sequence VISPKMLVDFLSHDKSISFNGCMT. Residues Cys102 and Cys194 are joined by a disulfide bond. Residues 105–125 traverse the membrane as a helical segment; that stretch reads QLYFFVTFVCTEYILLAIMAF. Over 126–144 the chain is Cytoplasmic; that stretch reads DRYVAICNPLRYPVIMTNQ. A helical transmembrane segment spans residues 145 to 165; sequence LCGTLAGGCWFCGLMTAMIKM. Topologically, residues 166–202 are extracellular; that stretch reads VFIAQLHYCGMPQINHYFCDISPLLNVSCEDASQAEM. N-linked (GlcNAc...) asparagine glycosylation is present at Asn191. The helical transmembrane segment at 203–222 threads the bilayer; sequence VDFFLALMVIAIPLCVVVAS. The Cytoplasmic portion of the chain corresponds to 223 to 242; sequence YAAILATILRIPSAQGRQKA. Residues 243–263 traverse the membrane as a helical segment; sequence FSTCASHLTVVILFYSMTLFT. At 264–276 the chain is on the extracellular side; the sequence is YARPKLMYAYNSN. A helical membrane pass occupies residues 277–297; sequence KVVSVLYTVIVPLLNPIIYCL. The Cytoplasmic segment spans residues 298 to 325; that stretch reads RNHEVKAALRKTIHCRGSGPQGNGAFSS.

Belongs to the G-protein coupled receptor 1 family.

It is found in the cell membrane. In terms of biological role, odorant receptor. The chain is Olfactory receptor 6Y1 (OR6Y1) from Homo sapiens (Human).